Consider the following 339-residue polypeptide: Tetraacyldisaccharide 4'-kinase (339 aa).

An ATP-binding site is contributed by 62-69; that stretch reads VAGGTGKT.

Belongs to the LpxK family.

It carries out the reaction a lipid A disaccharide + ATP = a lipid IVA + ADP + H(+). The protein operates within glycolipid biosynthesis; lipid IV(A) biosynthesis; lipid IV(A) from (3R)-3-hydroxytetradecanoyl-[acyl-carrier-protein] and UDP-N-acetyl-alpha-D-glucosamine: step 6/6. Functionally, transfers the gamma-phosphate of ATP to the 4'-position of a tetraacyldisaccharide 1-phosphate intermediate (termed DS-1-P) to form tetraacyldisaccharide 1,4'-bis-phosphate (lipid IVA). The protein is Tetraacyldisaccharide 4'-kinase of Xylella fastidiosa (strain M23).